A 134-amino-acid polypeptide reads, in one-letter code: ATP synthase epsilon chain, chloroplastic (134 aa).

The protein belongs to the ATPase epsilon chain family. F-type ATPases have 2 components, CF(1) - the catalytic core - and CF(0) - the membrane proton channel. CF(1) has five subunits: alpha(3), beta(3), gamma(1), delta(1), epsilon(1). CF(0) has three main subunits: a, b and c.

The protein localises to the plastid. It is found in the chloroplast thylakoid membrane. In terms of biological role, produces ATP from ADP in the presence of a proton gradient across the membrane. The sequence is that of ATP synthase epsilon chain, chloroplastic from Spinacia oleracea (Spinach).